Here is a 92-residue protein sequence, read N- to C-terminus: RNA-binding protein Hfq (92 aa).

The Sm domain maps to 11 to 71 (DRFLNHLRVN…ISTIIPSSYV (61 aa)).

Belongs to the Hfq family. In terms of assembly, homohexamer.

Its function is as follows. RNA chaperone that binds small regulatory RNA (sRNAs) and mRNAs to facilitate mRNA translational regulation in response to envelope stress, environmental stress and changes in metabolite concentrations. Also binds with high specificity to tRNAs. The protein is RNA-binding protein Hfq of Thermotoga maritima (strain ATCC 43589 / DSM 3109 / JCM 10099 / NBRC 100826 / MSB8).